Here is a 428-residue protein sequence, read N- to C-terminus: MRVATQLRVGIVGGGWNGCHLALELKKQGHRVSLFEQKPDIFQGVSGNFGIRLHKGPHYPRSKATRDSCREALVKFCETYPELVVHHESAIYAHGEADALGNPSKVSDEAFRDVCYESPECTAVDPKANGFQGLISAYNLDEPSVAIGDRLRNTFKEKLGRAGIYVHLNATVDRIIHTEDTNRIQTGDGQYVFDVVINATGYTSLLPQNIADALPVDIGITYQTCIALVYEDQQPQEKPLSFIVMDGWFPCVMPAIDTNEPLQKKYILTHGSYTILGSFDRHEEGQELLDSLDEEAIAARIKPHCEREITRFWPGFLDRFQYRGWKGSVLAKLKTTSEFRSSLTFEKDGVIHIFPGKVSNVVTAAEEVVPLINDIARRRHGVVREWNGVRFTVSSAFHTHSKEIGDKPGLGEHHTSNLQTYVSLVTAN.

FAD-binding positions include 52–60 (RLHKGPHYP) and 328–329 (SV).

The protein belongs to the aromatic-ring hydroxylase family. Requires FAD as cofactor.

Probable FAD-dependent monooxygenase; part of the gene cluster that mediates the biosynthesis of 5-hydroxy-2-hydroxymethyl-1,4-pyrone, also know as kojic acid, a by-product in the fermentation process of malting rice that acts as a chelation agent. Glucose might be converted to kojic acid by a combination of dehydrogenase and dehydratase reactions involving kojA and probably additional enzymes. This Aspergillus flavus (strain ATCC 200026 / FGSC A1120 / IAM 13836 / NRRL 3357 / JCM 12722 / SRRC 167) protein is FAD-dependent monooxygenase kojA.